Consider the following 152-residue polypeptide: Urease accessory protein UreE (152 aa).

Belongs to the UreE family.

It is found in the cytoplasm. Functionally, involved in urease metallocenter assembly. Binds nickel. Probably functions as a nickel donor during metallocenter assembly. The polypeptide is Urease accessory protein UreE (Enterobacter sp. (strain 638)).